The primary structure comprises 348 residues: CCN family member 2 (348 aa).

A signal peptide spans 1-25; that stretch reads MLASVAGPISLALVLLALCTRPAMG. The 72-residue stretch at 26–97 folds into the IGFBP N-terminal domain; sequence QDCSAQCQCA…NRKIGVCTAK (72 aa). Disulfide bonds link Cys-28-Cys-53, Cys-32-Cys-55, Cys-34-Cys-56, Cys-42-Cys-59, Cys-67-Cys-81, and Cys-73-Cys-94. The VWFC domain occupies 100–166; it reads APCVFGGSVY…GKCCEEWVCD (67 aa). The TSP type-1 domain occupies 197-242; the sequence is NCLVQTTEWSACSKTCGMGISTRVTNDNTFCRLEKQSRLCMVRPCE. Positions 246 to 348 are heparin-binding; that stretch reads EENIKKGKKC…YYRKMYGDMA (103 aa). 5 disulfide bridges follow: Cys-255–Cys-292, Cys-272–Cys-306, Cys-283–Cys-322, Cys-286–Cys-324, and Cys-291–Cys-328. Residues 255 to 329 form the CTCK domain; that stretch reads CIRTPKIAKP…KTCACHYNCP (75 aa).

This sequence belongs to the CCN family. In terms of assembly, monomer. Interacts with TSKU. In terms of tissue distribution, testis, spleen, kidney, lung, heart, and brain (lowest level in testis and highest in lung).

Its subcellular location is the secreted. The protein localises to the extracellular space. It is found in the extracellular matrix. In terms of biological role, major connective tissue mitoattractant secreted by vascular endothelial cells. Promotes proliferation and differentiation of chondrocytes. Is involved in the stimulation of osteoblast differentiation and has a critical role in osteogenesis. Mediates heparin- and divalent cation-dependent cell adhesion in many cell types including fibroblasts, myofibroblasts, endothelial and epithelial cells. Enhances fibroblast growth factor-induced DNA synthesis. The chain is CCN family member 2 from Mus musculus (Mouse).